The primary structure comprises 130 residues: DNA-directed RNA polymerase subunit omega (130 aa).

The segment at 110 to 130 is disordered; it reads EELLKGLEGLAPPEEQPEEDE.

This sequence belongs to the RNA polymerase subunit omega family. In terms of assembly, the RNAP catalytic core consists of 2 alpha, 1 beta, 1 beta' and 1 omega subunit. When a sigma factor is associated with the core the holoenzyme is formed, which can initiate transcription.

The enzyme catalyses RNA(n) + a ribonucleoside 5'-triphosphate = RNA(n+1) + diphosphate. In terms of biological role, promotes RNA polymerase assembly. Latches the N- and C-terminal regions of the beta' subunit thereby facilitating its interaction with the beta and alpha subunits. This is DNA-directed RNA polymerase subunit omega from Bradyrhizobium sp. (strain BTAi1 / ATCC BAA-1182).